Here is a 361-residue protein sequence, read N- to C-terminus: D-alanine--D-alanine ligase (361 aa).

The 211-residue stretch at Lys134–Asp344 folds into the ATP-grasp domain. Lys167–Glu222 serves as a coordination point for ATP. Positions 297, 311, and 313 each coordinate Mg(2+).

It belongs to the D-alanine--D-alanine ligase family. Requires Mg(2+) as cofactor. The cofactor is Mn(2+).

It is found in the cytoplasm. The enzyme catalyses 2 D-alanine + ATP = D-alanyl-D-alanine + ADP + phosphate + H(+). It participates in cell wall biogenesis; peptidoglycan biosynthesis. Functionally, cell wall formation. The chain is D-alanine--D-alanine ligase from Borreliella afzelii (strain PKo) (Borrelia afzelii).